The primary structure comprises 238 residues: Probable transcriptional regulatory protein M6_Spy0297 (238 aa).

The protein belongs to the TACO1 family. YeeN subfamily.

It is found in the cytoplasm. In Streptococcus pyogenes serotype M6 (strain ATCC BAA-946 / MGAS10394), this protein is Probable transcriptional regulatory protein M6_Spy0297.